Reading from the N-terminus, the 349-residue chain is S-adenosylmethionine:tRNA ribosyltransferase-isomerase (349 aa).

This sequence belongs to the QueA family. In terms of assembly, monomer.

It localises to the cytoplasm. It carries out the reaction 7-aminomethyl-7-carbaguanosine(34) in tRNA + S-adenosyl-L-methionine = epoxyqueuosine(34) in tRNA + adenine + L-methionine + 2 H(+). It functions in the pathway tRNA modification; tRNA-queuosine biosynthesis. In terms of biological role, transfers and isomerizes the ribose moiety from AdoMet to the 7-aminomethyl group of 7-deazaguanine (preQ1-tRNA) to give epoxyqueuosine (oQ-tRNA). The polypeptide is S-adenosylmethionine:tRNA ribosyltransferase-isomerase (Flavobacterium psychrophilum (strain ATCC 49511 / DSM 21280 / CIP 103535 / JIP02/86)).